Reading from the N-terminus, the 241-residue chain is Methylthioribulose-1-phosphate dehydratase (241 aa).

Cysteine 96 provides a ligand contact to substrate. Positions 114 and 116 each coordinate Zn(2+). Glutamate 138 acts as the Proton donor/acceptor in catalysis. Histidine 194 is a Zn(2+) binding site.

The protein belongs to the aldolase class II family. MtnB subfamily. Homotetramer. Interacts with APAF1. May interact with CASP1. It depends on Zn(2+) as a cofactor. As to expression, expressed in skeletal muscle (at protein level).

Its subcellular location is the cytoplasm. The enzyme catalyses 5-(methylsulfanyl)-D-ribulose 1-phosphate = 5-methylsulfanyl-2,3-dioxopentyl phosphate + H2O. It participates in amino-acid biosynthesis; L-methionine biosynthesis via salvage pathway; L-methionine from S-methyl-5-thio-alpha-D-ribose 1-phosphate: step 2/6. Functionally, catalyzes the dehydration of methylthioribulose-1-phosphate (MTRu-1-P) into 2,3-diketo-5-methylthiopentyl-1-phosphate (DK-MTP-1-P). Functions in the methionine salvage pathway, which plays a key role in cancer, apoptosis, microbial proliferation and inflammation. May inhibit the CASP1-related inflammatory response (pyroptosis), the CASP9-dependent apoptotic pathway and the cytochrome c-dependent and APAF1-mediated cell death. This is Methylthioribulose-1-phosphate dehydratase from Mus musculus (Mouse).